We begin with the raw amino-acid sequence, 2209 residues long: Kinetochore-associated protein 1 (2209 aa).

Threonine 13 is modified (phosphothreonine; by TTK). Phosphoserine; by TTK is present on serine 15. The residue at position 1035 (threonine 1035) is a Phosphothreonine. Serine 1045 bears the Phosphoserine mark.

In terms of assembly, interacts with ZW10; the interaction is required for stable association with the kinetochore. Component of the RZZ complex composed of KNTC1/ROD, ZW10 and ZWILCH; in the complex interacts directly with ZWILCH. As to expression, high expression in testis.

It is found in the cytoplasm. The protein resides in the nucleus. The protein localises to the chromosome. Its subcellular location is the centromere. It localises to the kinetochore. It is found in the cytoskeleton. The protein resides in the spindle. Essential component of the mitotic checkpoint, which prevents cells from prematurely exiting mitosis. Required for the assembly of the dynein-dynactin and MAD1-MAD2 complexes onto kinetochores. Its function related to the spindle assembly machinery is proposed to depend on its association in the mitotic RZZ complex. The polypeptide is Kinetochore-associated protein 1 (KNTC1) (Homo sapiens (Human)).